A 339-amino-acid chain; its full sequence is DNA repair protein RAD51 homolog 1 (339 aa).

Residues 1–23 are disordered; it reads MAMQVQFEASTDTSAEEESFGPE. The HhH domain occupies 48-77; that stretch reads TVESVAHAPKKELLNIKGISEAKADKILAE. 127–134 contributes to the ATP binding site; it reads GEFRTGKT.

The protein belongs to the RecA family. RAD51 subfamily. As to quaternary structure, forms linear homooligomers, giving rise to a RAD51 nucleoprotein filament, which is essential for strand-pairing reactions during DNA recombination. Expressed at high levels in lymphoid and reproductive organs.

Its subcellular location is the nucleus. The protein resides in the cytoplasm. It is found in the chromosome. Functionally, plays an important role in homologous strand exchange, a key step in DNA repair through homologous recombination (HR). Binds to single-stranded DNA in an ATP-dependent manner to form nucleoprotein filaments which are essential for the homology search and strand exchange. Catalyzes the recognition of homology and strand exchange between homologous DNA partners to form a joint molecule between a processed DNA break and the repair template. Recruited to resolve stalled replication forks during replication stress. Also involved in interstrand cross-link repair. This is DNA repair protein RAD51 homolog 1 (RAD51A) from Gallus gallus (Chicken).